We begin with the raw amino-acid sequence, 366 residues long: MALFGSNDVTTAHSDYEIVLEGGSSSWGKVKARAKVNAPPASPLLPADCDVKLNVKPLDPAKGFVRISAVFESIVDSTKNKLTIEADIANETKERRISVGEGMVSVGDFSHTFSFEGSVVNLFYYRSDAVRRNVPNPIYMQGRQFHDILMKVPLDNNDLIDTWEGTVKAIGSTGAFNDWIRDFWFIGPAFTALNEGGQRISRIEVNGLNTESGPKGPVGVSRWRFSHGGSGMVDSISRWAELFPSDKLNRPAQVEAGFRSDSQGIEVKVDGEFPGVSVDAGGGLRRILNHPLIPLVHHGMVGKFNNFNVDAQLKVVLPKGYKIRYAAPQYRSQNLEEYRWSGGAYARWVEHVCKGGVGQFEILYAQ.

Bacteriochlorophyll a is bound by residues His111, His146, His290, His297, and His298.

Homotrimer. Each subunit contains 7 molecules of bacteriochlorophyll a.

Its function is as follows. Intermediary in the transfer of excitation energy from the chlorophyll to the reaction centers. In Chlorobaculum tepidum (strain ATCC 49652 / DSM 12025 / NBRC 103806 / TLS) (Chlorobium tepidum), this protein is Bacteriochlorophyll a protein (fmoA).